We begin with the raw amino-acid sequence, 115 residues long: Putative HNH nuclease YajD (115 aa).

The 49-residue stretch at 27–75 (CGRCSREFVYSNLRELTVHHIDHDHTNNPEDGSNWELLCLYCHDHEHSK) folds into the HNH domain.

Belongs to the HNH nuclease family.

This chain is Putative HNH nuclease YajD (yajD), found in Escherichia coli O157:H7.